The chain runs to 1056 residues: Ribosomal protein S6 kinase delta-1 (1056 aa).

The PX domain occupies 8–132 (SADLARFYTV…DFFKGGVISD (125 aa)). The tract at residues 204 to 223 (VGAVASDSEPSRVEDRESRS) is disordered. Residues 212–222 (EPSRVEDRESR) are compositionally biased toward basic and acidic residues. Positions 276–304 (VQGESSPTRREAVKRRTAEYLMRAESICS) constitute an MIT domain. Phosphoserine is present on residues Ser-281, Ser-422, Ser-423, Ser-426, Ser-446, Ser-448, and Ser-454. The region spanning 343-444 (GVIDKVLLVM…SMPPRVCLQQ (102 aa)) is the Protein kinase 1 domain. A disordered region spans residues 426 to 504 (SLDIKEGRPS…KWLDSGSSSE (79 aa)). Over residues 443–454 (QQPSASPQGGSS) the composition is skewed to low complexity. Polar residues predominate over residues 473–482 (TSLTPSSQDD). A phosphoserine mark is found at Ser-493 and Ser-527. The segment at 529-588 (SEESVMQPEGDKADTQAVSSPASLATGSVSPSTHLRVFSGGEDLEAVSSPPTSESLSRSK) is disordered. Residues 544-561 (QAVSSPASLATGSVSPST) show a composition bias toward polar residues. Low complexity predominate over residues 576-587 (SSPPTSESLSRS). 8 positions are modified to phosphoserine: Ser-577, Ser-599, Ser-602, Ser-634, Ser-655, Ser-658, Ser-661, and Ser-787. The disordered stretch occupies residues 628–662 (TLEDGDSPSQSLDPGESKRESEAQDSVSRGSDDSV). Residues 789–1046 (RSESDRLGQV…VEDIKSHPFF (258 aa)) form the Protein kinase 2 domain. ATP is bound by residues 795-803 (LGQVEVVVT) and Lys-823. The Proton acceptor role is filled by Asp-919.

It belongs to the protein kinase superfamily. Ser/Thr protein kinase family. S6 kinase subfamily. Interacts with SPHK1 and phosphatidylinositol 3-phosphate. Interacts (via PX domain) with PRDX3.

It is found in the cytoplasm. The protein localises to the membrane. It localises to the early endosome. It carries out the reaction L-seryl-[protein] + ATP = O-phospho-L-seryl-[protein] + ADP + H(+). The catalysed reaction is L-threonyl-[protein] + ATP = O-phospho-L-threonyl-[protein] + ADP + H(+). May be involved in transmitting sphingosine-1 phosphate (SPP)-mediated signaling into the cell. Plays a role in the recruitment of PRDX3 to early endosomes. This is Ribosomal protein S6 kinase delta-1 (Rps6kc1) from Mus musculus (Mouse).